Here is a 204-residue protein sequence, read N- to C-terminus: Superoxide dismutase [Mn] (204 aa).

Residue His27 participates in Mn(2+) binding. Residues Thr34 and Thr70 each carry the phosphothreonine modification. Mn(2+)-binding residues include His82, Asp164, and His168.

This sequence belongs to the iron/manganese superoxide dismutase family. In terms of assembly, homodimer. It depends on Mn(2+) as a cofactor.

The catalysed reaction is 2 superoxide + 2 H(+) = H2O2 + O2. In terms of biological role, destroys superoxide anion radicals which are normally produced within the cells and which are toxic to biological systems. The sequence is that of Superoxide dismutase [Mn] (sodA) from Bacillus caldotenax.